Reading from the N-terminus, the 274-residue chain is Large ribosomal subunit protein uL2cz/uL2cy (274 aa).

The interval 224–274 (NPVDHPHGGGEGRAPIGRKKPTTPWGYPALGRRSRKRNKYSDNLILRRRSK) is disordered.

The protein belongs to the universal ribosomal protein uL2 family. Part of the 50S ribosomal subunit.

The protein localises to the plastid. It localises to the chloroplast. This Panax ginseng (Korean ginseng) protein is Large ribosomal subunit protein uL2cz/uL2cy (rpl2-A).